The sequence spans 205 residues: ATP-dependent Clp protease proteolytic subunit (205 aa).

Serine 108 acts as the Nucleophile in catalysis. Histidine 133 is a catalytic residue.

This sequence belongs to the peptidase S14 family. Fourteen ClpP subunits assemble into 2 heptameric rings which stack back to back to give a disk-like structure with a central cavity, resembling the structure of eukaryotic proteasomes.

Its subcellular location is the cytoplasm. The enzyme catalyses Hydrolysis of proteins to small peptides in the presence of ATP and magnesium. alpha-casein is the usual test substrate. In the absence of ATP, only oligopeptides shorter than five residues are hydrolyzed (such as succinyl-Leu-Tyr-|-NHMec, and Leu-Tyr-Leu-|-Tyr-Trp, in which cleavage of the -Tyr-|-Leu- and -Tyr-|-Trp bonds also occurs).. Cleaves peptides in various proteins in a process that requires ATP hydrolysis. Has a chymotrypsin-like activity. Plays a major role in the degradation of misfolded proteins. This is ATP-dependent Clp protease proteolytic subunit from Alcanivorax borkumensis (strain ATCC 700651 / DSM 11573 / NCIMB 13689 / SK2).